The chain runs to 523 residues: SWI/SNF and RSC complexes subunit arp9 (523 aa).

Residues 56–72 (INMEDPNVKTDETKVET) show a composition bias toward basic and acidic residues. Disordered stretches follow at residues 56-92 (INMEDPNVKTDETKVETSESTSEQPSNSNVTEEKNMG) and 319-339 (QKEREKNGESEKDEKPDNTDV). Over residues 79–92 (QPSNSNVTEEKNMG) the composition is skewed to polar residues. Positions 319–336 (QKEREKNGESEKDEKPDN) are enriched in basic and acidic residues.

This sequence belongs to the actin family. As to quaternary structure, component of the RSC complex composed of at least arp9, arp42, rsc1, rsc4, rsc7, rsc9, rsc58, sfh1, snf21, ssr1, ssr2, ssr3 and ssr4. The complex interacts with histone and histone variant components of centromeric chromatin. Component of the SWI/SNF global transcription activator complex composed of at least arp9, arp42, snf5, snf22, snf30, sbf59, sol1, ssr1, ssr2, ssr3, ssr4 and tfg3.

Its subcellular location is the cytoplasm. The protein resides in the nucleus. Component of the chromatin structure remodeling complex (RSC), which is involved in transcription regulation and nucleosome positioning. Controls particularly membrane and organelle development genes. Part of the SWI/SNF complex, an ATP-dependent chromatin remodeling complex, required for the positive and negative regulation of gene expression of a large number of genes. It changes chromatin structure by altering DNA-histone contacts within a nucleosome, leading eventually to a change in nucleosome position, thus facilitating or repressing binding of gene-specific transcription factors. This chain is SWI/SNF and RSC complexes subunit arp9 (arp9), found in Schizosaccharomyces pombe (strain 972 / ATCC 24843) (Fission yeast).